The chain runs to 427 residues: MLDIRVVRQDPEGVARGLARRGLAAGLEHFLELDARRRNLLVEVEGLKNRRNQVSAEVARLKKSGQDATELIASMREVGERIKELDEKVRAVEEELRQEMLKLPNIPHASVPDGLSDADNKPVRHWGELPRFKFEPRPHWEIAENLGIVDFERGGKVAGARFVFYRGAGARLERALINFMLDLHTIKHGYTEIFPPYMVNSASMLGTGQLPKFAEDMFHVEGTDYYLIPTAEVPVTNLYRGEILPGEKLPIYHVAYSACFRAEAGAAGRDTRGLIRQHQFNKVELVKFTRPEDSYEELEKLTRDAEEVLQLLGLPYRVVALCAGDLGFSAAKTYDLEVWMPGTACYREISSCSNFEDFQARRADIRFRPGPKEKPRLVHTLNGSGVAVGRTVAAILENYQQEDGTVLIPPALKPYMGGLTSIQPEQD.

230–232 (TAE) contributes to the L-serine binding site. 261–263 (RAE) contacts ATP. Glu-284 contacts L-serine. An ATP-binding site is contributed by 348–351 (EISS). Ser-384 serves as a coordination point for L-serine.

The protein belongs to the class-II aminoacyl-tRNA synthetase family. Type-1 seryl-tRNA synthetase subfamily. Homodimer. The tRNA molecule binds across the dimer.

The protein localises to the cytoplasm. The enzyme catalyses tRNA(Ser) + L-serine + ATP = L-seryl-tRNA(Ser) + AMP + diphosphate + H(+). The catalysed reaction is tRNA(Sec) + L-serine + ATP = L-seryl-tRNA(Sec) + AMP + diphosphate + H(+). The protein operates within aminoacyl-tRNA biosynthesis; selenocysteinyl-tRNA(Sec) biosynthesis; L-seryl-tRNA(Sec) from L-serine and tRNA(Sec): step 1/1. Its function is as follows. Catalyzes the attachment of serine to tRNA(Ser). Is also able to aminoacylate tRNA(Sec) with serine, to form the misacylated tRNA L-seryl-tRNA(Sec), which will be further converted into selenocysteinyl-tRNA(Sec). The protein is Serine--tRNA ligase of Moorella thermoacetica (strain ATCC 39073 / JCM 9320).